The primary structure comprises 328 residues: Malate dehydrogenase 1 (328 aa).

Position 12–18 (12–18 (GAAGQIG)) interacts with NAD(+). 2 residues coordinate substrate: Arg95 and Arg101. NAD(+)-binding positions include Asn108, Gln115, and 132 to 134 (VGN). Substrate-binding residues include Asn134 and Arg165. Catalysis depends on His190, which acts as the Proton acceptor.

The protein belongs to the LDH/MDH superfamily. MDH type 2 family.

The catalysed reaction is (S)-malate + NAD(+) = oxaloacetate + NADH + H(+). Functionally, catalyzes the reversible oxidation of malate to oxaloacetate. The chain is Malate dehydrogenase 1 from Albidiferax ferrireducens (strain ATCC BAA-621 / DSM 15236 / T118) (Rhodoferax ferrireducens).